We begin with the raw amino-acid sequence, 782 residues long: Protein bicaudal D (782 aa).

A coiled-coil region spans residues 15 to 77 (VQDLQMEVER…RHELDITQEA (63 aa)). Ser-103 carries the phosphoserine modification. The stretch at 107–249 (ETSLNLQIFD…LETLQGEREA (143 aa)) forms a coiled coil. A phosphoserine mark is found at Ser-285, Ser-288, and Ser-305. Position 306 is a phosphothreonine (Thr-306). Residue Ser-310 is modified to Phosphoserine. Coiled-coil stretches lie at residues 320 to 368 (SEIH…FMSR) and 444 to 477 (TTTL…TLTH). The residue at position 528 (Ser-528) is a Phosphoserine. Coiled coils occupy residues 603–630 (EKVN…KREQ) and 695–743 (CEEY…MEMD). An interaction with Rab6 region spans residues 699–722 (VTQVDDLNRQLEAAEEEKKTLNQL). A disordered region spans residues 744–782 (REMRHVRRPMPAQRGTSGKSSFSTRPSSRNPASSNANPF). Positions 757–767 (RGTSGKSSFST) are enriched in polar residues. Low complexity predominate over residues 768–782 (RPSSRNPASSNANPF).

Belongs to the BicD family. As to quaternary structure, may homodimerize but does not interact with BicDR. Interacts (via C-terminal domain) with Rab6. In ovaries, expressed in oocyte and nurse cells.

The protein localises to the cytoplasm. Its subcellular location is the cytoskeleton. In terms of biological role, this protein is essential for differentiation. It may play a role in localizing of Nanos (a maternal determinant) activity in oocytes. Functions redundantly with BicDR. During oogenesis, plays a specific role, together with Rab6 but independently of Sec5, in the polarization of the oocyte microtubule cytoskeleton, in oskar mRNA localization and in the anterodorsal secretion of grk. Plays a role in the biogenesis of annulate lamellae containing nuclear pore complex components. During macrochaetae development, together with BicDR, involved in Rab 6 and Spn-F stability and distribution and actin cytoskeleton organization. This is Protein bicaudal D from Drosophila melanogaster (Fruit fly).